The chain runs to 138 residues: Abscisic stress-ripening protein 5 (138 aa).

The span at 1-13 shows a compositional bias: basic residues; it reads MAEEKHHHHLFHH. Disordered regions lie at residues 1–27 and 106–138; these read MAEE…DSYG and GAGG…HLFG.

It belongs to the abscisic acid and water stress-induced protein family.

It is found in the nucleus. The protein localises to the cytoplasm. Its function is as follows. Involved in tolerance to aluminum. Regulates the expression of different genes that collectively contribute to the protection of the cell in response to aluminum stress. This chain is Abscisic stress-ripening protein 5, found in Oryza sativa subsp. indica (Rice).